The sequence spans 489 residues: Ribulose bisphosphate carboxylase large chain (489 aa).

Residues Asn128 and Thr178 each contribute to the substrate site. The active-site Proton acceptor is the Lys180. Lys182 provides a ligand contact to substrate. Mg(2+) contacts are provided by Lys206, Asp208, and Glu209. Residue Lys206 is modified to N6-carboxylysine. The active-site Proton acceptor is the His298. Positions 299, 331, and 383 each coordinate substrate.

It belongs to the RuBisCO large chain family. Type I subfamily. In terms of assembly, heterohexadecamer of 8 large chains and 8 small chains. It depends on Mg(2+) as a cofactor.

The catalysed reaction is 2 (2R)-3-phosphoglycerate + 2 H(+) = D-ribulose 1,5-bisphosphate + CO2 + H2O. It catalyses the reaction D-ribulose 1,5-bisphosphate + O2 = 2-phosphoglycolate + (2R)-3-phosphoglycerate + 2 H(+). Functionally, ruBisCO catalyzes two reactions: the carboxylation of D-ribulose 1,5-bisphosphate, the primary event in carbon dioxide fixation, as well as the oxidative fragmentation of the pentose substrate. Both reactions occur simultaneously and in competition at the same active site. This Nitrosospira sp. (strain 40KI) protein is Ribulose bisphosphate carboxylase large chain.